A 96-amino-acid polypeptide reads, in one-letter code: Putative defensin-like protein 236 (96 aa).

The N-terminal stretch at 1 to 23 (MKNATSLIIYCFLMFLLMNNVKG) is a signal peptide. Intrachain disulfides connect cysteine 31–cysteine 93, cysteine 41–cysteine 70, cysteine 49–cysteine 83, and cysteine 68–cysteine 85.

Belongs to the DEFL family.

Its subcellular location is the secreted. This chain is Putative defensin-like protein 236 (SCRL20), found in Arabidopsis thaliana (Mouse-ear cress).